The following is a 576-amino-acid chain: Epsin-1 (576 aa).

Residues R8, K11, R25, N30, R63, and H73 each contribute to the a 1,2-diacyl-sn-glycero-3-phospho-(1D-myo-inositol-4,5-bisphosphate) site. Residues 12-144 (NIVHNYSEAE…RDEDRLREER (133 aa)) enclose the ENTH domain. Positions 149–185 (KTKEKLAQTATASSAAVGSGPPPEAEQAWPQSSGEEE) are disordered. Residues 157 to 167 (TATASSAAVGS) show a composition bias toward low complexity. 3 UIM domains span residues 183 to 202 (EEEL…ADQP), 208 to 227 (EDDA…HDKE), and 233 to 252 (GDDL…TGGK). The span at 265–296 (TAPAPAPTTDPWGGPAPMAAAVPTAAPTSDPW) shows a compositional bias: low complexity. The disordered stretch occupies residues 265 to 404 (TAPAPAPTTD…GGFDTEPDEF (140 aa)). Repeat copies occupy residues 274-276 (DPW), 294-296 (DPW), 306-308 (DPW), 319-321 (DPW), 332-334 (DPW), 349-351 (DPW), 367-369 (DPW), and 377-379 (DPW). An 8 X 3 AA repeats of [ED]-P-W region spans residues 274–379 (DPWGGPAPMA…TPAPAFSDPW (106 aa)). Pro residues predominate over residues 297-314 (GGPPVPPAADPWGGPAPT). Positions 332–368 (DPWGGTPAPAAGEGPTPDPWGSSDGGVPVSGPSASDP) are enriched in low complexity. S382 is modified (phosphoserine; by CDK1). The [DE]-X(1,2)-F-X-X-[FL]-X-X-X-R motif motif lies at 402 to 411 (DEFSDFDRLR). Residues S419, S420, S435, S447, and S454 each carry the phosphoserine modification. The segment at 448–576 (LAEAVGSPPP…PAPNTNPFLL (129 aa)) is disordered. Residues 454–468 (SPPPAATPTPTPPTR) show a composition bias toward pro residues. Phosphothreonine is present on residues T460, T464, and T470. Phosphoserine is present on S473. The residue at position 494 (T494) is a Phosphothreonine. 2 repeat units span residues 502–504 (NPF) and 518–520 (NPF). Residues 502–574 (NPFLPGGGPA…GPPAPNTNPF (73 aa)) form a 3 X 3 AA repeats of N-P-F region. R534 is subject to Omega-N-methylarginine. The segment covering 557–570 (GLPPMMPPGPPAPN) has biased composition (pro residues). Repeat unit 3 spans residues 572 to 574 (NPF).

This sequence belongs to the epsin family. Monomer. Binds clathrin, ZBTB16/ZNF145 and ITSN1. Binds ubiquitinated proteins. Binds AP2A1 and AP2A2. Interacts with RALBP1 in a complex also containing NUMB and TFAP2A during interphase and mitosis. Interacts with AP2B1. Interacts with UBQLN2. Interacts with REPS2; the interaction is direct. Interacts with EPS15; the interaction is direct. Interacts with ENTREP1. In terms of processing, phosphorylated on serine and/or threonine residues in mitotic cells. Phosphorylation reduces interaction with REPS2, AP-2 and the membrane fraction. Depolarization of synaptosomes results in dephosphorylation. Ubiquitinated.

Its subcellular location is the cytoplasm. The protein resides in the cell membrane. It localises to the nucleus. It is found in the membrane. The protein localises to the clathrin-coated pit. Its function is as follows. Binds to membranes enriched in phosphatidylinositol 4,5-bisphosphate (PtdIns(4,5)P2). Modifies membrane curvature and facilitates the formation of clathrin-coated invaginations. Regulates receptor-mediated endocytosis. This is Epsin-1 (EPN1) from Homo sapiens (Human).